A 71-amino-acid polypeptide reads, in one-letter code: Large ribosomal subunit protein uL29 (71 aa).

Belongs to the universal ribosomal protein uL29 family.

This Methanococcus maripaludis (strain C7 / ATCC BAA-1331) protein is Large ribosomal subunit protein uL29.